Reading from the N-terminus, the 215-residue chain is uncharacterized protein (215 aa).

S-adenosyl-L-methionine contacts are provided by Gly-53, Glu-74, and Asp-97.

The protein belongs to the methyltransferase superfamily. YrrT family.

Could be a S-adenosyl-L-methionine-dependent methyltransferase. This is an uncharacterized protein from Geobacillus kaustophilus (strain HTA426).